A 559-amino-acid polypeptide reads, in one-letter code: Cocaine esterase (559 aa).

Residues Met-1–Gly-26 form the signal peptide. A Pyrrolidone carboxylic acid modification is found at Gln-27. An intrachain disulfide couples Cys-95 to Cys-123. Residue Asn-111 is glycosylated (N-linked (GlcNAc...) asparagine). The Acyl-ester intermediate role is filled by Ser-228. N-linked (GlcNAc...) asparagine glycosylation is present at Asn-276. A disulfide bond links Cys-280 and Cys-291. Active-site charge relay system residues include Glu-345 and His-457. A Prevents secretion from ER motif is present at residues His-556–Leu-559.

The protein belongs to the type-B carboxylesterase/lipase family. In terms of assembly, monomer. Post-translationally, glycosylated. In terms of tissue distribution, preferentially expressed in intestine with moderate expression in liver. Within the intestine, highest expression is found in small intestine with lower expression in colon and rectum.

The protein localises to the endoplasmic reticulum lumen. The catalysed reaction is cocaine + H2O = ecgonine methyl ester + benzoate + H(+). The enzyme catalyses a carboxylic ester + H2O = an alcohol + a carboxylate + H(+). It catalyses the reaction 4-methylumbelliferyl acetate + H2O = 4-methylumbelliferone + acetate + H(+). It carries out the reaction 2-(5Z,8Z,11Z,14Z-eicosatetraenoyl)-glycerol + H2O = glycerol + (5Z,8Z,11Z,14Z)-eicosatetraenoate + H(+). The catalysed reaction is prostaglandin E2 1-glyceryl ester + H2O = prostaglandin E2 + glycerol + H(+). The enzyme catalyses prostaglandin F2alpha 1-glyceryl ester + H2O = prostaglandin F2alpha + glycerol + H(+). In terms of biological role, involved in the detoxification of xenobiotics and in the activation of ester and amide prodrugs. Shows high catalytic efficiency for hydrolysis of cocaine, 4-methylumbelliferyl acetate, heroin and 6-monoacetylmorphine. Hydrolyzes aspirin, substrates with large alcohol group and small acyl group and endogenous lipids such as triacylglycerol. Converts monoacylglycerides to free fatty acids and glycerol. Hydrolyzes of 2-arachidonoylglycerol and prostaglandins. In Homo sapiens (Human), this protein is Cocaine esterase.